Consider the following 64-residue polypeptide: Large ribosomal subunit protein bL35 (64 aa).

Belongs to the bacterial ribosomal protein bL35 family.

The polypeptide is Large ribosomal subunit protein bL35 (Streptomyces avermitilis (strain ATCC 31267 / DSM 46492 / JCM 5070 / NBRC 14893 / NCIMB 12804 / NRRL 8165 / MA-4680)).